Here is a 275-residue protein sequence, read N- to C-terminus: Ciliary microtubule inner protein 2B (275 aa).

Disordered stretches follow at residues 62–84 (PPIRPPRSPEVPRESLPVRRGQE) and 125–169 (EKQG…SPYS). 2 stretches are compositionally biased toward basic and acidic residues: residues 71–84 (EVPRESLPVRRGQE) and 125–147 (EKQGSEELPKEAKGRKDTEKDQV).

It belongs to the CIMIP2 family. As to quaternary structure, microtubule inner protein component of sperm flagellar doublet microtubules. Expressed in airway epithelial cells.

It is found in the cytoplasm. The protein localises to the cytoskeleton. Its subcellular location is the cilium axoneme. The protein resides in the flagellum axoneme. In terms of biological role, microtubule inner protein (MIP) part of the dynein-decorated doublet microtubules (DMTs) in cilia axoneme, which is required for motile cilia beating. This Homo sapiens (Human) protein is Ciliary microtubule inner protein 2B.